The primary structure comprises 206 residues: Small ribosomal subunit protein eS1 (206 aa).

It belongs to the eukaryotic ribosomal protein eS1 family.

The chain is Small ribosomal subunit protein eS1 from Natronomonas pharaonis (strain ATCC 35678 / DSM 2160 / CIP 103997 / JCM 8858 / NBRC 14720 / NCIMB 2260 / Gabara) (Halobacterium pharaonis).